The chain runs to 556 residues: 2-succinyl-5-enolpyruvyl-6-hydroxy-3-cyclohexene-1-carboxylate synthase (556 aa).

This sequence belongs to the TPP enzyme family. MenD subfamily. Homodimer. Requires Mg(2+) as cofactor. It depends on Mn(2+) as a cofactor. Thiamine diphosphate is required as a cofactor.

The catalysed reaction is isochorismate + 2-oxoglutarate + H(+) = 5-enolpyruvoyl-6-hydroxy-2-succinyl-cyclohex-3-ene-1-carboxylate + CO2. It participates in quinol/quinone metabolism; 1,4-dihydroxy-2-naphthoate biosynthesis; 1,4-dihydroxy-2-naphthoate from chorismate: step 2/7. The protein operates within quinol/quinone metabolism; menaquinone biosynthesis. In terms of biological role, catalyzes the thiamine diphosphate-dependent decarboxylation of 2-oxoglutarate and the subsequent addition of the resulting succinic semialdehyde-thiamine pyrophosphate anion to isochorismate to yield 2-succinyl-5-enolpyruvyl-6-hydroxy-3-cyclohexene-1-carboxylate (SEPHCHC). The chain is 2-succinyl-5-enolpyruvyl-6-hydroxy-3-cyclohexene-1-carboxylate synthase from Salmonella dublin (strain CT_02021853).